The primary structure comprises 119 residues: MEAKAVLRNTPTSPRKMRLVAGLVRGKQVNQAKAILLNSTKAASKNVMLTLKSAVSNYTLNNPDERVSDQELFVKAIFVDGGMTLKRTLPAPMGRAYRIRKRSNHLTIVVDKVKNPVIN.

It belongs to the universal ribosomal protein uL22 family. As to quaternary structure, part of the 50S ribosomal subunit.

Its function is as follows. This protein binds specifically to 23S rRNA; its binding is stimulated by other ribosomal proteins, e.g. L4, L17, and L20. It is important during the early stages of 50S assembly. It makes multiple contacts with different domains of the 23S rRNA in the assembled 50S subunit and ribosome. Functionally, the globular domain of the protein is located near the polypeptide exit tunnel on the outside of the subunit, while an extended beta-hairpin is found that lines the wall of the exit tunnel in the center of the 70S ribosome. The sequence is that of Large ribosomal subunit protein uL22 from Chlorobium chlorochromatii (strain CaD3).